The sequence spans 166 residues: Phosphopantetheine adenylyltransferase (166 aa).

Serine 8 lines the substrate pocket. ATP contacts are provided by residues 8–9 (SF) and histidine 16. Residues lysine 40, threonine 72, and arginine 86 each contribute to the substrate site. Residues 87–89 (GLR), glutamate 97, and 122–128 (HSFLSSS) contribute to the ATP site.

Belongs to the bacterial CoaD family. As to quaternary structure, homohexamer. Requires Mg(2+) as cofactor.

It localises to the cytoplasm. The enzyme catalyses (R)-4'-phosphopantetheine + ATP + H(+) = 3'-dephospho-CoA + diphosphate. It participates in cofactor biosynthesis; coenzyme A biosynthesis; CoA from (R)-pantothenate: step 4/5. Reversibly transfers an adenylyl group from ATP to 4'-phosphopantetheine, yielding dephospho-CoA (dPCoA) and pyrophosphate. The protein is Phosphopantetheine adenylyltransferase of Synechococcus sp. (strain RCC307).